We begin with the raw amino-acid sequence, 379 residues long: Leukocyte elastase inhibitor (379 aa).

Methionine 1 carries the N-acetylmethionine modification. Residues lysine 137 and lysine 177 each carry the N6-acetyllysine modification. The segment at 351 to 379 (NFNADHPFIFFIRHNPSANILFLGRFSSP) is CARD-binding motif (CBM).

The protein belongs to the serpin family. Ov-serpin subfamily. As to quaternary structure, monomer. Interacts (via C-terminus) with CASP1; CASP4 (via CARD domain) and CASP5; these interactions regulate the activity of inflammatory caspases. Interacts with PRTN3. Interacts with GZMH. Interacts with TMSB4. The N-terminus is blocked.

The protein resides in the secreted. Its subcellular location is the cytoplasm. It localises to the cytolytic granule. The protein localises to the early endosome. Functionally, neutrophil serine protease inhibitor that plays an essential role in the regulation of the innate immune response, inflammation and cellular homeostasis. Acts primarily to protect the cell from proteases released in the cytoplasm during stress or infection. These proteases are important in killing microbes but when released from granules, these potent enzymes also destroy host proteins and contribute to mortality. Regulates the activity of the neutrophil proteases elastase, cathepsin G, proteinase-3, chymase, chymotrypsin, and kallikrein-3. Also acts as a potent intracellular inhibitor of GZMH by directly blocking its proteolytic activity. During inflammation, limits the activity of inflammatory caspases CASP1, CASP4 and CASP5 by suppressing their caspase-recruitment domain (CARD) oligomerization and enzymatic activation. When secreted, promotes the proliferation of beta-cells via its protease inhibitory function. The chain is Leukocyte elastase inhibitor (SERPINB1) from Equus caballus (Horse).